The primary structure comprises 536 residues: Atrial natriuretic peptide receptor 3 (536 aa).

A signal peptide spans 1–26 (MRSLLLFTFSACVLLARVLLAGGASS). A propeptide spanning residues 27–40 (GAGDTRPGSRRRAR) is cleaved from the precursor. The Extracellular portion of the chain corresponds to 41 to 478 (EALAAQKIEV…KSSGGLEESA (438 aa)). The N-linked (GlcNAc...) asparagine glycan is linked to asparagine 81. 3 residues coordinate chloride: serine 101, valine 130, and cysteine 131. 2 cysteine pairs are disulfide-bonded: cysteine 103/cysteine 131 and cysteine 208/cysteine 256. 2 N-linked (GlcNAc...) asparagine glycosylation sites follow: asparagine 288 and asparagine 389. The chain crosses the membrane as a helical span at residues 479–499 (VTGIVVGALLGAGLLMAFYFF). At 500–536 (RKKYRITIERRNQQEESNIGKHRELREDSIRSHFSVA) the chain is on the cytoplasmic side.

This sequence belongs to the ANF receptor family. In terms of assembly, homodimer; disulfide-linked. Interacts with OSTN.

Its subcellular location is the cell membrane. Receptor for the natriuretic peptide hormones, binding with similar affinities atrial natriuretic peptide NPPA/ANP, brain natriuretic peptide NPPB/BNP, and C-type natriuretic peptide NPPC/CNP. May function as a clearance receptor for NPPA, NPPB and NPPC, regulating their local concentrations and effects. Acts as a regulator of osteoblast differentiation and bone growth by binding to its ligand osteocrin, thereby preventing binding between NPR3/NPR-C and natriuretic peptides, leading to increase cGMP production. The chain is Atrial natriuretic peptide receptor 3 (Npr3) from Mus musculus (Mouse).